We begin with the raw amino-acid sequence, 92 residues long: DNA-binding protein HU (92 aa).

It belongs to the bacterial histone-like protein family. As to quaternary structure, homodimer.

Functionally, histone-like DNA-binding protein which is capable of wrapping DNA to stabilize it, and thus to prevent its denaturation under extreme environmental conditions. The protein is DNA-binding protein HU (hup) of Buchnera aphidicola subsp. Baizongia pistaciae (strain Bp).